The primary structure comprises 418 residues: Centromere protein U (418 aa).

Residues 1–11 (MAPRGRRRPRP) show a composition bias toward basic residues. Positions 1–76 (MAPRGRRRPR…TYETFDPPLH (76 aa)) are disordered. The Nuclear localization signal signature appears at 6 to 23 (RRRPRPHRSEGARRSKNT). Residues 12–42 (HRSEGARRSKNTLERTHSMKDKAGQKCKPID) are compositionally biased toward basic and acidic residues. Thr-78 bears the Phosphothreonine; by PLK1 mark. A disordered region spans residues 88–227 (SKHCGLSLSS…KRKKSRSKAI (140 aa)). Thr-98 carries the phosphothreonine modification. Phosphoserine is present on Ser-108. Thr-110 is modified (phosphothreonine). A phosphoserine mark is found at Ser-111, Ser-116, and Ser-120. A compositionally biased stretch (basic residues) spans 124–133 (SAKKPGRKLR). Phosphoserine occurs at positions 136, 139, and 141. A compositionally biased stretch (basic and acidic residues) spans 145 to 165 (SDTRRKVKSAEKISTQRHEVI). Over residues 180-193 (SVTSKKTGPLSAQP) the composition is skewed to polar residues. A Glycyl lysine isopeptide (Lys-Gly) (interchain with G-Cter in SUMO2) cross-link involves residue Lys-185. 2 positions are modified to phosphoserine: Ser-190 and Ser-194. Residues 208-224 (TQKKGKISHDKRKKSRS) show a composition bias toward basic residues. Ser-232 carries the post-translational modification Phosphoserine. 2 coiled-coil regions span residues 297–356 (QMLT…NAAY) and 397–417 (LLGAESHLRNINHQLEKLLDQ). The Nuclear localization signal signature appears at 303-320 (KRKNAKMISDIEKKRQRM).

This sequence belongs to the CENP-U/AME1 family. In terms of assembly, component of the CENPA-NAC complex, at least composed of CENPA, CENPC, CENPH, CENPM, CENPN, CENPT and CENPU. The CENPA-NAC complex interacts with the CENPA-CAD complex, composed of CENPI, CENPK, CENPL, CENPO, CENPP, CENPQ, CENPR and CENPS. Interacts with MLF1. Interacts with PLK1. (Microbial infection) Interacts with the N-terminal domain of Kaposi's sarcoma-associated herpesvirus latent nuclear antigen (LNA). Post-translationally, phosphorylated by PLK1 at Thr-78, creating a self-tethering site that specifically interacts with the polo-box domain of PLK1. As to expression, expressed at high levels in the testis, fetal liver, thymus, bone marrow and at lower levels in the lymph nodes, placenta, colon and spleen. Present in all cell lines examined, including B-cells, T-cells, epithelial cells and fibroblast cells. Expressed at high levels in glioblastoma cell lines.

The protein localises to the cytoplasm. Its subcellular location is the nucleus. The protein resides in the chromosome. It localises to the centromere. It is found in the kinetochore. Component of the CENPA-NAC (nucleosome-associated) complex, a complex that plays a central role in assembly of kinetochore proteins, mitotic progression and chromosome segregation. The CENPA-NAC complex recruits the CENPA-CAD (nucleosome distal) complex and may be involved in incorporation of newly synthesized CENPA into centromeres. Plays an important role in the correct PLK1 localization to the mitotic kinetochores. A scaffold protein responsible for the initial recruitment and maintenance of the kinetochore PLK1 population until its degradation. Involved in transcriptional repression. The sequence is that of Centromere protein U (CENPU) from Homo sapiens (Human).